A 566-amino-acid polypeptide reads, in one-letter code: KsdD-like steroid dehydrogenase Rv0785 (566 aa).

Residue 23-54 participates in FAD binding; the sequence is DAIVVGAGLAGLVAACELADRGLRVLILDQEN.

It belongs to the FAD-dependent oxidoreductase 2 family. It depends on FAD as a cofactor.

Its pathway is lipid metabolism; steroid biosynthesis. Able to catalyze the elimination of the C-1 and C-2 hydrogen atoms of the A-ring from the polycyclic ring structure of 3-ketosteroids. In Mycobacterium tuberculosis (strain ATCC 25618 / H37Rv), this protein is KsdD-like steroid dehydrogenase Rv0785.